The primary structure comprises 211 residues: Large ribosomal subunit protein uL3 (211 aa).

Q150 bears the N5-methylglutamine mark.

The protein belongs to the universal ribosomal protein uL3 family. As to quaternary structure, part of the 50S ribosomal subunit. Forms a cluster with proteins L14 and L19. Methylated by PrmB.

One of the primary rRNA binding proteins, it binds directly near the 3'-end of the 23S rRNA, where it nucleates assembly of the 50S subunit. The sequence is that of Large ribosomal subunit protein uL3 from Pseudomonas putida (strain GB-1).